A 380-amino-acid chain; its full sequence is 3-isopropylmalate dehydratase large subunit (380 aa).

The [4Fe-4S] cluster site is built by cysteine 262, cysteine 320, and cysteine 323.

Belongs to the aconitase/IPM isomerase family. LeuC type 2 subfamily. As to quaternary structure, heterodimer of LeuC and LeuD. Requires [4Fe-4S] cluster as cofactor.

The enzyme catalyses (2R,3S)-3-isopropylmalate = (2S)-2-isopropylmalate. It participates in amino-acid biosynthesis; L-leucine biosynthesis; L-leucine from 3-methyl-2-oxobutanoate: step 2/4. In terms of biological role, catalyzes the isomerization between 2-isopropylmalate and 3-isopropylmalate, via the formation of 2-isopropylmaleate. The protein is 3-isopropylmalate dehydratase large subunit of Thermococcus kodakarensis (strain ATCC BAA-918 / JCM 12380 / KOD1) (Pyrococcus kodakaraensis (strain KOD1)).